The primary structure comprises 244 residues: Biosynthetic peptidoglycan transglycosylase (244 aa).

A helical transmembrane segment spans residues 26-46; it reads FLSYFIGLTVALTFLFRFVPI.

It belongs to the glycosyltransferase 51 family.

The protein localises to the cell inner membrane. The catalysed reaction is [GlcNAc-(1-&gt;4)-Mur2Ac(oyl-L-Ala-gamma-D-Glu-L-Lys-D-Ala-D-Ala)](n)-di-trans,octa-cis-undecaprenyl diphosphate + beta-D-GlcNAc-(1-&gt;4)-Mur2Ac(oyl-L-Ala-gamma-D-Glu-L-Lys-D-Ala-D-Ala)-di-trans,octa-cis-undecaprenyl diphosphate = [GlcNAc-(1-&gt;4)-Mur2Ac(oyl-L-Ala-gamma-D-Glu-L-Lys-D-Ala-D-Ala)](n+1)-di-trans,octa-cis-undecaprenyl diphosphate + di-trans,octa-cis-undecaprenyl diphosphate + H(+). It participates in cell wall biogenesis; peptidoglycan biosynthesis. Its function is as follows. Peptidoglycan polymerase that catalyzes glycan chain elongation from lipid-linked precursors. The protein is Biosynthetic peptidoglycan transglycosylase of Mannheimia succiniciproducens (strain KCTC 0769BP / MBEL55E).